The following is a 402-amino-acid chain: Argininosuccinate synthase (402 aa).

ATP contacts are provided by residues alanine 10 to serine 18 and alanine 38. Tyrosine 89 contributes to the L-citrulline binding site. Position 119 (glycine 119) interacts with ATP. Positions 121, 125, and 126 each coordinate L-aspartate. Asparagine 125 serves as a coordination point for L-citrulline. L-citrulline contacts are provided by arginine 129, serine 177, serine 186, glutamate 262, and tyrosine 274.

Belongs to the argininosuccinate synthase family. Type 1 subfamily. As to quaternary structure, homotetramer.

The protein localises to the cytoplasm. The enzyme catalyses L-citrulline + L-aspartate + ATP = 2-(N(omega)-L-arginino)succinate + AMP + diphosphate + H(+). Its pathway is amino-acid biosynthesis; L-arginine biosynthesis; L-arginine from L-ornithine and carbamoyl phosphate: step 2/3. The protein is Argininosuccinate synthase of Prochlorococcus marinus (strain SARG / CCMP1375 / SS120).